The chain runs to 144 residues: Prefoldin subunit alpha (144 aa).

This sequence belongs to the prefoldin alpha subunit family. In terms of assembly, heterohexamer of two alpha and four beta subunits.

It is found in the cytoplasm. Functionally, molecular chaperone capable of stabilizing a range of proteins. Seems to fulfill an ATP-independent, HSP70-like function in archaeal de novo protein folding. This chain is Prefoldin subunit alpha, found in Metallosphaera sedula (strain ATCC 51363 / DSM 5348 / JCM 9185 / NBRC 15509 / TH2).